The sequence spans 91 residues: PqqA binding protein (91 aa).

The protein belongs to the PqqD family. Monomer. Interacts with PqqE.

The protein operates within cofactor biosynthesis; pyrroloquinoline quinone biosynthesis. In terms of biological role, functions as a PqqA binding protein and presents PqqA to PqqE, in the pyrroloquinoline quinone (PQQ) biosynthetic pathway. In Pseudomonas entomophila (strain L48), this protein is PqqA binding protein.